The following is a 315-amino-acid chain: Lipoyl synthase (315 aa).

Positions 63, 68, 74, 89, 93, 96, and 303 each coordinate [4Fe-4S] cluster. A Radical SAM core domain is found at phenylalanine 75–valine 292.

Belongs to the radical SAM superfamily. Lipoyl synthase family. The cofactor is [4Fe-4S] cluster.

Its subcellular location is the cytoplasm. The enzyme catalyses [[Fe-S] cluster scaffold protein carrying a second [4Fe-4S](2+) cluster] + N(6)-octanoyl-L-lysyl-[protein] + 2 oxidized [2Fe-2S]-[ferredoxin] + 2 S-adenosyl-L-methionine + 4 H(+) = [[Fe-S] cluster scaffold protein] + N(6)-[(R)-dihydrolipoyl]-L-lysyl-[protein] + 4 Fe(3+) + 2 hydrogen sulfide + 2 5'-deoxyadenosine + 2 L-methionine + 2 reduced [2Fe-2S]-[ferredoxin]. It participates in protein modification; protein lipoylation via endogenous pathway; protein N(6)-(lipoyl)lysine from octanoyl-[acyl-carrier-protein]: step 2/2. Its function is as follows. Catalyzes the radical-mediated insertion of two sulfur atoms into the C-6 and C-8 positions of the octanoyl moiety bound to the lipoyl domains of lipoate-dependent enzymes, thereby converting the octanoylated domains into lipoylated derivatives. This chain is Lipoyl synthase, found in Chromobacterium violaceum (strain ATCC 12472 / DSM 30191 / JCM 1249 / CCUG 213 / NBRC 12614 / NCIMB 9131 / NCTC 9757 / MK).